Consider the following 144-residue polypeptide: Large ribosomal subunit protein uL15 (144 aa).

The tract at residues 1 to 49 is disordered; the sequence is MIKLECLQDPSPRKRRTKLLGRGPSSGHGKTSSRGHKGDCSRSGYKRRF.

Belongs to the universal ribosomal protein uL15 family. In terms of assembly, part of the 50S ribosomal subunit.

Binds to the 23S rRNA. The sequence is that of Large ribosomal subunit protein uL15 from Chlamydia trachomatis serovar A (strain ATCC VR-571B / DSM 19440 / HAR-13).